We begin with the raw amino-acid sequence, 358 residues long: Phosphoserine aminotransferase (358 aa).

Position 41 (Arg41) interacts with L-glutamate. Pyridoxal 5'-phosphate contacts are provided by residues 75 to 76, Trp100, Thr148, Asp167, and Gln190; that span reads AS. Lys191 bears the N6-(pyridoxal phosphate)lysine mark. 233-234 contacts pyridoxal 5'-phosphate; sequence NT.

Belongs to the class-V pyridoxal-phosphate-dependent aminotransferase family. SerC subfamily. As to quaternary structure, homodimer. Pyridoxal 5'-phosphate is required as a cofactor.

The protein localises to the cytoplasm. It carries out the reaction O-phospho-L-serine + 2-oxoglutarate = 3-phosphooxypyruvate + L-glutamate. It catalyses the reaction 4-(phosphooxy)-L-threonine + 2-oxoglutarate = (R)-3-hydroxy-2-oxo-4-phosphooxybutanoate + L-glutamate. The protein operates within amino-acid biosynthesis; L-serine biosynthesis; L-serine from 3-phospho-D-glycerate: step 2/3. It functions in the pathway cofactor biosynthesis; pyridoxine 5'-phosphate biosynthesis; pyridoxine 5'-phosphate from D-erythrose 4-phosphate: step 3/5. In terms of biological role, catalyzes the reversible conversion of 3-phosphohydroxypyruvate to phosphoserine and of 3-hydroxy-2-oxo-4-phosphonooxybutanoate to phosphohydroxythreonine. In Campylobacter jejuni subsp. jejuni serotype O:2 (strain ATCC 700819 / NCTC 11168), this protein is Phosphoserine aminotransferase.